Consider the following 608-residue polypeptide: Glutamine--fructose-6-phosphate aminotransferase [isomerizing] (608 aa).

Cys-2 acts as the Nucleophile; for GATase activity in catalysis. The Glutamine amidotransferase type-2 domain maps to 2-217; the sequence is CGIVGYIGKK…DNEFVLMTKD (216 aa). SIS domains are found at residues 284 to 424 and 453 to 598; these read ISKE…EKGT and IMKK…VDKP. Lys-603 acts as the For Fru-6P isomerization activity in catalysis.

As to quaternary structure, homodimer.

It localises to the cytoplasm. It catalyses the reaction D-fructose 6-phosphate + L-glutamine = D-glucosamine 6-phosphate + L-glutamate. Functionally, catalyzes the first step in hexosamine metabolism, converting fructose-6P into glucosamine-6P using glutamine as a nitrogen source. This Clostridium tetani (strain Massachusetts / E88) protein is Glutamine--fructose-6-phosphate aminotransferase [isomerizing].